Reading from the N-terminus, the 2531-residue chain is Neurogenic locus notch homolog protein 1 (2531 aa).

Positions 1 to 18 (MPRLLAPLLCLTLLPALA) are cleaved as a signal peptide. Residues 19 to 1725 (ARGLRCSQPS…VEPPLPSQLH (1707 aa)) lie on the Extracellular side of the membrane. EGF-like domains are found at residues 20–58 (RGLRCSQPSGTCLNGGRCEVANGTEACVCSGAFVGQRCQ), 59–99 (DPSP…PLCL), 102–139 (LANACLANPCRNGGTCDLLTLTEYKCRCPPGWSGKSCQ), and 140–176 (QADPCASNPCANGGQCLPFESSYICGCPPGFHGPTCR). 33 disulfides stabilise this stretch: Cys-24/Cys-37, Cys-31/Cys-46, Cys-48/Cys-57, Cys-63/Cys-74, Cys-68/Cys-87, Cys-89/Cys-98, Cys-106/Cys-117, Cys-111/Cys-127, Cys-129/Cys-138, Cys-144/Cys-155, Cys-149/Cys-164, Cys-166/Cys-175, Cys-182/Cys-195, Cys-189/Cys-204, Cys-206/Cys-215, Cys-222/Cys-233, Cys-227/Cys-243, Cys-245/Cys-254, Cys-261/Cys-272, Cys-266/Cys-281, Cys-283/Cys-292, Cys-299/Cys-312, Cys-306/Cys-321, Cys-323/Cys-332, Cys-339/Cys-350, Cys-344/Cys-359, Cys-361/Cys-370, Cys-376/Cys-387, Cys-381/Cys-398, Cys-400/Cys-409, Cys-416/Cys-429, Cys-423/Cys-438, and Cys-440/Cys-449. Asn-41 carries an N-linked (GlcNAc...) asparagine glycan. Ser-65 carries an O-linked (Glc...) serine glycan. A glycan (O-linked (Fuc...) threonine) is linked at Thr-73. The O-linked (Fuc...) threonine glycan is linked to Thr-116. Ser-146 carries an O-linked (Glc...) serine glycan. Positions 178–216 (DVNECSQNPGLCRHGGTCHNEIGSYRCACRATHTGPHCE) constitute an EGF-like 5; calcium-binding domain. Thr-194 carries O-linked (Fuc...) threonine glycosylation. One can recognise an EGF-like 6 domain in the interval 218 to 255 (PYVPCSPSPCQNGGTCRPTGDTTHECACLPGFAGQNCE). Thr-232 is a glycosylation site (O-linked (Fuc...) threonine; alternate). Thr-232 carries an O-linked (GalNAc...) threonine; alternate glycan. Positions 257–293 (NVDDCPGNNCKNGGACVDGVNTYNCRCPPEWTGQYCT) constitute an EGF-like 7; calcium-binding domain. The region spanning 295-333 (DVDECQLMPNACQNGGTCHNSHGGYNCVCVNGWTGEDCS) is the EGF-like 8; calcium-binding domain. Thr-311 carries an O-linked (Fuc...) threonine glycan. Residues 335–371 (NIDDCASAACFQGATCHDRVASFYCECPHGRTGLLCH) form the EGF-like 9; calcium-binding domain. A glycan (O-linked (Glc...) serine) is linked at Ser-341. Thr-349 carries an O-linked (Fuc...) threonine glycan. One can recognise an EGF-like 10 domain in the interval 372–410 (LNDACISNPCNEGSNCDTNPVNGKAICTCPSGYTGPACS). Ser-378 carries an O-linked (Glc...) serine glycan. One can recognise an EGF-like 11; calcium-binding domain in the interval 412–450 (DVDECALGANPCEHAGKCLNTLGSFECQCLQGYTGPRCE). Positions 420 to 421 (AN) are interaction with DLL4. Residues Thr-432 and Ser-435 each coordinate Ca(2+). Ser-435 carries O-linked (Glc...) serine glycosylation. Positions 448 to 452 (RCEID) are interaction with DLL4. Ca(2+)-binding residues include Asp-452, Val-453, and Glu-455. The region spanning 452 to 488 (DVNECISNPCQNDATCLDQIGEFQCICMPGYEGVYCE) is the EGF-like 12; calcium-binding domain. 3 cysteine pairs are disulfide-bonded: Cys-456/Cys-467, Cys-461/Cys-476, and Cys-478/Cys-487. An O-linked (Glc...) serine glycan is attached at Ser-458. Thr-466 is a glycosylation site (O-linked (Fuc...) threonine). Residues Asp-469 and Gln-470 each contribute to the Ca(2+) site. Residues Asn-490, Thr-491, and Glu-493 each contribute to the Ca(2+) site. An EGF-like 13; calcium-binding domain is found at 490–526 (NTDECASSPCLHNGRCVDKINEFLCQCPKGFSGHLCQ). Disulfide bonds link Cys-494/Cys-505, Cys-499/Cys-514, Cys-516/Cys-525, Cys-532/Cys-543, Cys-537/Cys-552, Cys-554/Cys-563, Cys-570/Cys-580, Cys-575/Cys-589, Cys-591/Cys-600, Cys-607/Cys-618, Cys-612/Cys-627, Cys-629/Cys-638, Cys-645/Cys-655, Cys-650/Cys-664, Cys-666/Cys-675, Cys-682/Cys-693, Cys-687/Cys-702, Cys-704/Cys-713, Cys-720/Cys-730, Cys-725/Cys-739, Cys-741/Cys-750, Cys-757/Cys-768, Cys-762/Cys-777, Cys-779/Cys-788, Cys-795/Cys-806, Cys-800/Cys-815, Cys-817/Cys-826, Cys-833/Cys-844, Cys-838/Cys-855, Cys-857/Cys-866, Cys-873/Cys-884, Cys-878/Cys-893, Cys-895/Cys-904, Cys-911/Cys-922, Cys-916/Cys-931, Cys-933/Cys-942, Cys-949/Cys-960, Cys-954/Cys-969, Cys-971/Cys-980, Cys-987/Cys-998, Cys-992/Cys-1007, Cys-1009/Cys-1018, Cys-1025/Cys-1036, Cys-1030/Cys-1045, Cys-1047/Cys-1056, Cys-1063/Cys-1074, Cys-1068/Cys-1083, Cys-1085/Cys-1094, Cys-1101/Cys-1122, Cys-1116/Cys-1131, Cys-1133/Cys-1142, Cys-1149/Cys-1160, Cys-1154/Cys-1169, Cys-1171/Cys-1180, Cys-1187/Cys-1198, Cys-1192/Cys-1207, Cys-1209/Cys-1218, Cys-1225/Cys-1244, Cys-1238/Cys-1253, Cys-1255/Cys-1264, Cys-1271/Cys-1284, Cys-1276/Cys-1293, Cys-1295/Cys-1304, Cys-1311/Cys-1322, Cys-1316/Cys-1334, Cys-1336/Cys-1345, Cys-1352/Cys-1363, Cys-1357/Cys-1372, Cys-1374/Cys-1383, Cys-1391/Cys-1403, Cys-1397/Cys-1414, Cys-1416/Cys-1425, Cys-1449/Cys-1472, Cys-1454/Cys-1467, and Cys-1463/Cys-1479. O-linked (Glc...) serine glycosylation is present at Ser-496. Positions 507 and 508 each coordinate Ca(2+). The EGF-like 14; calcium-binding domain occupies 528 to 564 (DVDECASTPCKNGAKCLDGPNTYTCVCTEGYTGTHCE). An O-linked (Glc...) serine glycan is attached at Ser-534. The EGF-like 15; calcium-binding domain maps to 566–601 (DIDECDPDPCHYGLCKDGVATFTCLCQPGYTGHHCE). The region spanning 603 to 639 (NINECHSQPCRHGGTCQDRDNYYLCLCLKGTTGPNCE) is the EGF-like 16; calcium-binding domain. The O-linked (Glc...) serine glycan is linked to Ser-609. Thr-617 carries O-linked (Fuc...) threonine glycosylation. An EGF-like 17; calcium-binding domain is found at 641-676 (NLDDCASNPCDSGTCLDKIDGYECACEPGYTGSMCN). O-linked (Glc...) serine glycosylation occurs at Ser-647. The EGF-like 18; calcium-binding domain maps to 678–714 (NIDECAGSPCHNGGTCEDGIAGFTCRCPEGYHDPTCL). O-linked (Fuc...) threonine glycosylation is present at Thr-692. An EGF-like 19; calcium-binding domain is found at 716–751 (EVNECNSNPCIHGACRDGLNGYKCDCAPGWSGTNCD). O-linked (Glc...) serine glycosylation occurs at Ser-722. The 37-residue stretch at 753–789 (NNNECESNPCVNGGTCKDMTSGYVCTCREGFSGPNCQ) folds into the EGF-like 20; calcium-binding domain. O-linked (Glc...) serine glycosylation occurs at Ser-759. The O-linked (Fuc...) threonine glycan is linked to Thr-767. O-linked (GlcNAc) serine glycosylation is present at Ser-784. The EGF-like 21; calcium-binding domain maps to 791–827 (NINECASNPCLNQGTCIDDVAGYKCNCPLPYTGATCE). The O-linked (Glc...) serine glycan is linked to Ser-797. O-linked (Fuc...) threonine glycosylation is present at Thr-805. Positions 829–867 (VLAPCATSPCKNSGVCKESEDYESFSCVCPTGWQGQTCE) constitute an EGF-like 22 domain. In terms of domain architecture, EGF-like 23; calcium-binding spans 869–905 (DINECVKSPCRHGASCQNTNGSYRCLCQAGYTGRNCE). Asn-888 carries N-linked (GlcNAc...) asparagine glycosylation. Thr-900 carries O-linked (GlcNAc) threonine glycosylation. The EGF-like 24 domain maps to 907–943 (DIDDCRPNPCHNGGSCTDGVNAAFCDCLPGFQGAFCE). Ser-921 is a glycosylation site (O-linked (Fuc) serine). Positions 945 to 981 (DINECASNPCQNGANCTDCVDSYTCTCPTGFNGIHCE) constitute an EGF-like 25; calcium-binding domain. Residue Ser-951 is glycosylated (O-linked (Glc...) serine). The N-linked (GlcNAc...) asparagine glycan is linked to Asn-959. Residues 983 to 1019 (NTPDCTESSCFNGGTCVDGINSFTCLCPPGFTGSYCQ) form the EGF-like 26 domain. The O-linked (Fuc...) threonine glycan is linked to Thr-997. Positions 1021–1057 (DVNECDSRPCLHGGTCQDSYGTYKCTCPQGYTGLNCQ) constitute an EGF-like 27; calcium-binding domain. The O-linked (Glc...) serine glycan is linked to Ser-1027. O-linked (Fuc...) threonine glycosylation occurs at Thr-1035. 2 EGF-like domains span residues 1059-1095 (LVRWCDSAPCKNGGKCWQTNTQYHCECRSGWTGFNCD) and 1097-1143 (LSVS…SYCE). Residue Ser-1065 is glycosylated (O-linked (Glc...) serine). In terms of domain architecture, EGF-like 30; calcium-binding spans 1145–1181 (EVDECSPNPCQNGATCTDYLGGFSCKCVAGYHGSNCS). The O-linked (Fuc...) threonine glycan is linked to Thr-1159. Asn-1179 is a glycosylation site (N-linked (GlcNAc...) asparagine). One can recognise an EGF-like 31; calcium-binding domain in the interval 1183 to 1219 (EINECLSQPCQNGGTCIDLTNTYKCSCPRGTQGVHCE). A glycan (O-linked (Glc...) serine) is linked at Ser-1189. The O-linked (Fuc...) threonine glycan is linked to Thr-1197. An EGF-like 32; calcium-binding domain is found at 1221 to 1265 (NVDDCHPPLDPASRSPKCFNNGTCVDQVGGYTCTCPPGFVGERCE). The N-linked (GlcNAc...) asparagine glycan is linked to Asn-1241. EGF-like domains follow at residues 1267–1305 (DVNECLSNPCDPRGTQNCVQRVNDFHCECRAGHTGRRCE), 1307–1346 (VINGCRGKPCRNGGVCAVASNTARGFICRCPAGFEGATCE), 1348–1384 (DARTCGSLRCLNGGTCISGPRSPTCLCLGSFTGPECQ), and 1387–1426 (ASSPCVGSNPCYNQGTCEPTSESPFYRCLCPAKFNGLLCH). O-linked (Glc...) serine glycosylation occurs at Ser-1273. Thr-1362 carries O-linked (Fuc...) threonine glycosylation. The O-linked (GlcNAc...) threonine glycan is linked to Thr-1379. A glycan (O-linked (Fuc...) threonine; alternate) is linked at Thr-1402. O-linked (GalNAc...) threonine; alternate glycosylation occurs at Thr-1402. LNR repeat units lie at residues 1449–1489 (CELP…PWKN), 1490–1531 (CTQS…CNPL), and 1532–1571 (YDQYCKDHFSDGHCDQGCNSAECEWDGLDCAEHVPERLAA). Residues Asp-1457, Asn-1460, Asp-1475, and Asp-1478 each contribute to the Ca(2+) site. N-linked (GlcNAc...) asparagine glycosylation occurs at Asn-1489. 5 disulfides stabilise this stretch: Cys-1490/Cys-1514, Cys-1496/Cys-1509, Cys-1505/Cys-1521, Cys-1536/Cys-1549, and Cys-1545/Cys-1561. An N-linked (GlcNAc...) asparagine glycan is attached at Asn-1587. O-linked (GalNAc...) threonine glycosylation occurs at Thr-1715. The interaction with PSEN1 stretch occupies residues 1718–1750 (PPLPSQLHLMYVAAAAFVLLFFVGCGVLLSRKR). A helical transmembrane segment spans residues 1726 to 1746 (LMYVAAAAFVLLFFVGCGVLL). The Cytoplasmic portion of the chain corresponds to 1747 to 2531 (SRKRRRQHGQ…QITHIPEAFK (785 aa)). Residue Lys-1749 forms a Glycyl lysine isopeptide (Lys-Gly) (interchain with G-Cter in ubiquitin) linkage. Residues 1770-1798 (KKKRREPLGEDSVGLKPLKNASDGALMDD) form a disordered region. A Phosphothreonine modification is found at Thr-1851. 5 ANK repeats span residues 1917 to 1946 (TGETALHLAARYSRSDAAKRLLEASADANI), 1950 to 1980 (MGRTPLHAAVSADAQGVFQILLRNRATDLDA), 1984 to 2013 (DGTTPLILAARLAVEGMLEDLINSHADVNA), 2017 to 2046 (LGKSALHWAAAVNNVDAAVVLLKNGANKDM), and 2050 to 2079 (KEETPLFLAAREGSYETAKVLLDHFANRDI). An HIF1AN-binding region spans residues 1937 to 1945 (LLEASADAN). A (3S)-3-hydroxyasparagine; by HIF1AN modification is found at Asn-1945. An HIF1AN-binding region spans residues 2004-2012 (LINSHADVN). Asn-2012 is modified ((3S)-3-hydroxyasparagine; by HIF1AN). 3 disordered regions span residues 2141 to 2185 (SATQ…DSSS), 2382 to 2428 (QPQN…SLPV), and 2440 to 2531 (PTSL…EAFK). Low complexity predominate over residues 2382–2395 (QPQNLQPPSQPHLS). Positions 2440 to 2478 (PTSLPSSMVPPMTTTQFLTPPSQHSYSSSPVDNTPSHQL) are enriched in polar residues. The span at 2488-2503 (PSPESPDQWSSSSPHS) shows a compositional bias: low complexity. Residues 2504 to 2524 (NISDWSEGISSPPTSMPSQIT) show a composition bias toward polar residues.

Belongs to the NOTCH family. In terms of assembly, heterodimer of a C-terminal fragment N(TM) and an N-terminal fragment N(EC) which are probably linked by disulfide bonds. Interacts with DNER, DTX1, DTX2 and RBPJ/RBPSUH. Also interacts with MAML1, MAML2 and MAML3 which act as transcriptional coactivators for NOTCH1. Notch 1 intracellular domain interacts with SNW1; the interaction involves multimerized NOTCH1 NICD and is implicated in a formation of an intermediate preactivation complex which associates with DNA-bound CBF-1/RBPJ. The activated membrane-bound form interacts with AAK1 which promotes NOTCH1 stabilization. Forms a trimeric complex with FBXW7 and SGK1. Interacts with HIF1AN. HIF1AN negatively regulates the function of notch intracellular domain (NICD), accelerating myogenic differentiation. Interacts (via NICD) with SNAI1 (via zinc fingers); the interaction induces SNAI1 degradation via MDM2-mediated ubiquitination and inhibits SNAI1-induced cell invasion. Interacts (via NICD) with MDM2A. Interacts (via NICD) with BCL6; the interaction decreases MAML1 recruitment by NOTCH1 NICD on target genes DNA and inhibits NOTCH1 transactivation activity. Interacts with THBS4. Interacts (via the EGF-like repeat region) with CCN3 (via CTCK domain). Interacts (via EGF-like domains) with DLL4 (via N-terminal DSL and MNNL domains). Interacts with ZMIZ1. Interacts (via NICD domain) with MEGF10 (via the cytoplasmic domain). Interacts with DLL1 and JAG1. Interacts (via NICD domain) with PRAG1. Forms a complex with PRAG1, N1ICD and MAML1, in a MAML1-dependent manner. Interacts (via transmembrane region) with PSEN1; the interaction is direct. Interacts with ZFP64. Post-translationally, synthesized in the endoplasmic reticulum as an inactive form which is proteolytically cleaved by a furin-like convertase in the trans-Golgi network before it reaches the plasma membrane to yield an active, ligand-accessible form. Cleavage results in a C-terminal fragment N(TM) and a N-terminal fragment N(EC). Following ligand binding, it is cleaved by ADAM17 to yield a membrane-associated intermediate fragment called notch extracellular truncation (NEXT). Following endocytosis, this fragment is then cleaved by one of the catalytic subunits of gamma-secretase (PSEN1 or PSEN2) to release a Notch-derived peptide containing the intracellular domain (NICD) from the membrane. Phosphorylated. In terms of processing, O-glycosylated on the EGF-like domains. O-glucosylated at Ser-435 by KDELC1 and KDELC2. Contains both O-linked fucose and O-linked glucose in the EGF-like domains 11, 12 and 13, which are interacting with the residues on DLL4. O-linked glycosylation by GALNT11 is involved in determination of left/right symmetry: glycosylation promotes activation of NOTCH1, possibly by promoting cleavage by ADAM17, modulating the balance between motile and immotile (sensory) cilia at the left-right organiser (LRO). MFNG-, RFNG- and LFNG-mediated modification of O-fucose residues at specific EGF-like domains results in inhibition of its activation by JAG1 and enhancement of its activation by DLL1 via an increased binding to DLL1. Post-translationally, ubiquitinated. Undergoes 'Lys-29'-linked polyubiquitination by ITCH; promotes the lysosomal degradation of non-activated internalized NOTCH1. Deubiquitination by USP12 is required for transport of internalized non-activated receptor from late endosomes to lysosomes for degradation. Monoubiquitination at Lys-1749 is required for activation by gamma-secretase cleavage, it promotes interaction with AAK1, which stabilizes it. Deubiquitination by EIF3F is necessary for nuclear import of activated Notch. Hydroxylated at Asn-1945 and Asn-2012 by HIF1AN. Hydroxylation reduces affinity for HI1AN and may thus indirectly modulate negative regulation of NICD. Expressed in the brain, kidney and spleen. Expressed in postnatal central nervous system (CNS) germinal zones and, in early postnatal life, within numerous cells throughout the CNS. Found in both subventricular and ventricular germinal zones.

It localises to the cell membrane. The protein localises to the late endosome membrane. It is found in the nucleus. In terms of biological role, functions as a receptor for membrane-bound ligands Jagged-1 (JAG1), Jagged-2 (JAG2) and Delta-1 (DLL1) to regulate cell-fate determination. Upon ligand activation through the released notch intracellular domain (NICD) it forms a transcriptional activator complex with RBPJ/RBPSUH and activates genes of the enhancer of split locus. Affects the implementation of differentiation, proliferation and apoptotic programs. Involved in angiogenesis; negatively regulates endothelial cell proliferation and migration and angiogenic sprouting. Involved in the maturation of both CD4(+) and CD8(+) cells in the thymus. Important for follicular differentiation and possibly cell fate selection within the follicle. During cerebellar development, functions as a receptor for neuronal DNER and is involved in the differentiation of Bergmann glia. Represses neuronal and myogenic differentiation. May play an essential role in postimplantation development, probably in some aspect of cell specification and/or differentiation. May be involved in mesoderm development, somite formation and neurogenesis. May enhance HIF1A function by sequestering HIF1AN away from HIF1A. Required for the THBS4 function in regulating protective astrogenesis from the subventricular zone (SVZ) niche after injury. Involved in determination of left/right symmetry by modulating the balance between motile and immotile (sensory) cilia at the left-right organiser (LRO). The polypeptide is Neurogenic locus notch homolog protein 1 (Notch1) (Rattus norvegicus (Rat)).